The following is a 161-amino-acid chain: Cyclic pyranopterin monophosphate synthase (161 aa).

Substrate contacts are provided by residues 75–77 (LCH) and 113–114 (ME). Residue Asp-128 is part of the active site.

Belongs to the MoaC family. In terms of assembly, homohexamer; trimer of dimers.

It catalyses the reaction (8S)-3',8-cyclo-7,8-dihydroguanosine 5'-triphosphate = cyclic pyranopterin phosphate + diphosphate. The protein operates within cofactor biosynthesis; molybdopterin biosynthesis. Functionally, catalyzes the conversion of (8S)-3',8-cyclo-7,8-dihydroguanosine 5'-triphosphate to cyclic pyranopterin monophosphate (cPMP). The polypeptide is Cyclic pyranopterin monophosphate synthase (Escherichia coli O139:H28 (strain E24377A / ETEC)).